A 175-amino-acid chain; its full sequence is Co-chaperone protein HscB homolog (175 aa).

The J domain occupies 7–79; the sequence is SHFDLFHLPA…LKRATYLLSL (73 aa).

Belongs to the HscB family. Interacts with HscA and stimulates its ATPase activity.

In terms of biological role, co-chaperone involved in the maturation of iron-sulfur cluster-containing proteins. Seems to help targeting proteins to be folded toward HscA. This is Co-chaperone protein HscB homolog from Burkholderia multivorans (strain ATCC 17616 / 249).